A 72-amino-acid polypeptide reads, in one-letter code: MMSKLGVLLTICLLLFPLTAVPLDGDQPADRPAERMQDGISSEHHPFFDSVKKKQQCCPPVACNMGCEPCCG.

The first 20 residues, 1-20, serve as a signal peptide directing secretion; it reads MMSKLGVLLTICLLLFPLTA. A propeptide spanning residues 21 to 51 is cleaved from the precursor; the sequence is VPLDGDQPADRPAERMQDGISSEHHPFFDSV. Gln55 is modified (pyrrolidone carboxylic acid). 3 disulfide bridges follow: Cys57–Cys71, Cys58–Cys67, and Cys63–Cys70. Pro69 is modified (4-hydroxyproline). Position 71 is a cysteine amide (Cys71).

Belongs to the conotoxin M superfamily. Expressed by the venom duct.

Its subcellular location is the secreted. This chain is Conotoxin TxMMSK-04, found in Conus textile (Cloth-of-gold cone).